The sequence spans 354 residues: Protein PHLOEM PROTEIN 2-LIKE A8 (354 aa).

The region spanning 12-179 (TGPQVFINFR…EMILEIQKAL (168 aa)) is the TIR domain. E86 is a catalytic residue.

It carries out the reaction NAD(+) + H2O = ADP-D-ribose + nicotinamide + H(+). This chain is Protein PHLOEM PROTEIN 2-LIKE A8 (PP2A8), found in Arabidopsis thaliana (Mouse-ear cress).